Here is a 267-residue protein sequence, read N- to C-terminus: MPGQQATKHESLLDQLSLKGKVVVVTGASGPKGMGIEAARGCAEMGAAVAITYASRAQGAEENVKELEKTYGIKAKAYKCQVDSYESCEKLVKDVVADFGQIDAFIANAGATADSGILDGSVEAWNHVVQVDLNGTFHCAKAVGHHFKERGTGSLVITASMSGHIANFPQEQTSYNVAKAGCIHMARSLANEWRDFARVNSISPGYIDTGLSDFVPKETQQLWHSMIPMGRDGLAKELKGAYVYFASDASTYTTGADLLIDGGYTTR.

2 residues coordinate NADP(+): N108 and K141. The Proton donor role is filled by S160. Residues Y175, K179, I207, and T209 each contribute to the NADP(+) site. The active-site Proton acceptor is Y175. K179 serves as the catalytic Lowers pKa of active site Tyr.

It belongs to the short-chain dehydrogenases/reductases (SDR) family. Exists as monomer, dimer and tetramer.

The catalysed reaction is D-mannitol + NADP(+) = D-fructose + NADPH + H(+). Functionally, interconverts D-mannitol and D-fructose. Not active with fructose 6-phosphate or NADH. The polypeptide is NADP-dependent mannitol dehydrogenase (Davidiella tassiana (Mycosphaerella tassiana)).